The following is a 177-amino-acid chain: Ribonuclease clavin (177 aa).

Positions 1-27 are cleaved as a signal peptide; that stretch reads MVAIKNLVLVALTAVTALAMPSPLEER. Intrachain disulfides connect Cys33–Cys175 and Cys103–Cys159. The active site involves His77. The tract at residues 98-117 is disordered; it reads WGNSDCDRPPKHSKNGDGKN. Positions 102–117 are enriched in basic and acidic residues; the sequence is DCDRPPKHSKNGDGKN. Catalysis depends on Glu123, which acts as the Proton acceptor. His164 (proton donor) is an active-site residue.

The protein belongs to the ribonuclease U2 family.

Its subcellular location is the secreted. Clavin has the same substrate specificity as alpha-sarcin. It is specific for purines in both single- and double-stranded RNA. Its toxic action on eukaryotic cells is the result of cleavage of a single phosphodiester bond in the 60S subunit of ribosomes. This chain is Ribonuclease clavin (cla), found in Aspergillus clavatus (strain ATCC 1007 / CBS 513.65 / DSM 816 / NCTC 3887 / NRRL 1 / QM 1276 / 107).